We begin with the raw amino-acid sequence, 428 residues long: Flotillin-2a (428 aa).

Residues C4, C19, and C20 are each lipidated (S-palmitoyl cysteine).

It belongs to the band 7/mec-2 family. Flotillin subfamily. Heterooligomer; Heterooligomerizes with ic complex of flotillins 1 and 2. Palmitoylation may be required for the formation of higher order complexes and for neurite outgrowth in cultured neural stem cells.

Its subcellular location is the membrane. The protein localises to the endosome. Functionally, may play a role in axon growth and regeneration. May be involved in epidermal cell adhesion and epidermal structure and function. The chain is Flotillin-2a (flot2a) from Danio rerio (Zebrafish).